A 118-amino-acid chain; its full sequence is Beta-2-microglobulin (118 aa).

A signal peptide spans 1–20; it reads MARFVVLVLLGLLYLSHLDA. Positions 25–113 constitute an Ig-like C1-type domain; sequence PKVQVYSRHP…TTLSEPKVVK (89 aa). Residues Cys45 and Cys99 are joined by a disulfide bond.

This sequence belongs to the beta-2-microglobulin family. In terms of assembly, heterodimer of an alpha chain and a beta chain. Beta-2-microglobulin is the beta-chain of major histocompatibility complex class I molecules.

The protein localises to the secreted. In terms of biological role, component of the class I major histocompatibility complex (MHC). Involved in the presentation of peptide antigens to the immune system. This Felis catus (Cat) protein is Beta-2-microglobulin (B2M).